We begin with the raw amino-acid sequence, 463 residues long: MSDGFERAPGVGRGRGRGRGIETAEGGKTPGFSGASGAGDEPGRAKAAGSQQQEPLRPPRTGPPGGGGDAGAAQTSHKRTSPAAQLPAHTYTMAVSKAQPADRGRLLSNLSANAAEFYPSGYSVEANNCVEENGCYPVLPEGTLTEYVQDFLNHLTEQPGSFEAEVFPFSDVLNNCVTTDESLQELVELIYQQAISVPNFSYTGARLCNYLSNNLHINPQNQNFRQLLLKRCQTEFEKRDQAAKGDGAARKQFHAFVLFLGELYLNLEIKGAKGQVTRAEILQSGLQELLNSLFSNPVDDNLMCAVKLLKLTGSVLEDAWKEKALSCMEEVMLRMKNVVLDANCSRDVKQMLLKLVELRSSNWGRVHAASTFKEATPENDPNYFMNEPTFYTSEGVPFTAADPDYQEKYQELLDREDFFRDYDENGTDGGDSYFEDDDDNEMDPEMEEAYEKFCLESEHKKKQ.

The interval 1–86 is disordered; sequence MSDGFERAPG…HKRTSPAAQL (86 aa). The 218-residue stretch at 145–362 folds into the MIF4G domain; sequence TEYVQDFLNH…LKLVELRSSN (218 aa). Residues 420–442 form a disordered region; the sequence is RDYDENGTDGGDSYFEDDDDNEM. Residues 433 to 442 are compositionally biased toward acidic residues; the sequence is YFEDDDDNEM.

In terms of assembly, interacts with the RRM1-RRM2 and C-terminal regions of epabp.

The protein resides in the cytoplasm. Its function is as follows. Acts as a coactivator in the regulation of translation initiation of poly(A)-containing mRNAs. The sequence is that of Polyadenylate-binding protein-interacting protein 1 from Xenopus laevis (African clawed frog).